We begin with the raw amino-acid sequence, 130 residues long: Small ribosomal subunit protein uS9 (130 aa).

The segment at 105–130 is disordered; that stretch reads TRDSRMKERKKPGLRGARRAPQFSKR. The segment covering 111-130 has biased composition (basic residues); the sequence is KERKKPGLRGARRAPQFSKR.

It belongs to the universal ribosomal protein uS9 family.

This chain is Small ribosomal subunit protein uS9, found in Lysinibacillus sphaericus (strain C3-41).